Here is a 499-residue protein sequence, read N- to C-terminus: Topoisomerase I damage affected protein 11 (499 aa).

Residues 32–62 are disordered; that stretch reads RKTGRKIRSASSNGYRLEHHRTSSAGSMHSQ. Positions 179–231 form a coiled coil; that stretch reads ALLQSLATKELELLECKQKIEDLKKQTQHEEQNYTRRARELHELKEQVSKHLD. T236 is subject to Phosphothreonine. Phosphoserine occurs at positions 244 and 286. Disordered stretches follow at residues 252–306, 332–377, and 400–499; these read LESR…SKQS, WDDS…SVSR, and DVIT…QKLS. Residues 257–287 show a composition bias toward polar residues; it reads ENAGNSSLPSSVSKPKNMGHQSTNQSRSVSP. The span at 290–301 shows a compositional bias: basic and acidic residues; that stretch reads IQERRQRDDSSD. Polar residues-rich tracts occupy residues 332–359 and 368–377; these read WDDSLSGTPEVQEGTPTSNSESSAQQYD and KSPSQGSVSR. A compositionally biased stretch (basic and acidic residues) spans 403 to 421; the sequence is TDNRCDPVYKSDRQHEQKK. Positions 470-479 are enriched in basic residues; that stretch reads TREKKSKRSS.

This sequence belongs to the TDA11 family.

The protein resides in the cytoplasm. The sequence is that of Topoisomerase I damage affected protein 11 (TDA11) from Saccharomyces cerevisiae (strain Zymaflore VL3) (Baker's yeast).